The chain runs to 173 residues: RNA pyrophosphohydrolase (173 aa).

The Nudix hydrolase domain occupies 6–149 (GFRANVGIIL…KRGVYRRALR (144 aa)). The Nudix box signature appears at 38–59 (GGIDEGETPLDAMYRELWEEVG).

This sequence belongs to the Nudix hydrolase family. RppH subfamily. A divalent metal cation serves as cofactor.

Its function is as follows. Accelerates the degradation of transcripts by removing pyrophosphate from the 5'-end of triphosphorylated RNA, leading to a more labile monophosphorylated state that can stimulate subsequent ribonuclease cleavage. In Psychrobacter sp. (strain PRwf-1), this protein is RNA pyrophosphohydrolase.